We begin with the raw amino-acid sequence, 499 residues long: Glycerol kinase (499 aa).

T13 contacts ADP. Residues T13, T14, and S15 each coordinate ATP. T13 contacts sn-glycerol 3-phosphate. An ADP-binding site is contributed by R17. Residues R83, E84, Y135, and D245 each contribute to the sn-glycerol 3-phosphate site. Residues R83, E84, Y135, D245, and Q246 each coordinate glycerol. Residues T267 and G310 each coordinate ADP. ATP contacts are provided by T267, G310, Q314, and G411. G411 and N415 together coordinate ADP.

It belongs to the FGGY kinase family.

The catalysed reaction is glycerol + ATP = sn-glycerol 3-phosphate + ADP + H(+). The protein operates within polyol metabolism; glycerol degradation via glycerol kinase pathway; sn-glycerol 3-phosphate from glycerol: step 1/1. Inhibited by fructose 1,6-bisphosphate (FBP). Functionally, key enzyme in the regulation of glycerol uptake and metabolism. Catalyzes the phosphorylation of glycerol to yield sn-glycerol 3-phosphate. The chain is Glycerol kinase from Xanthomonas axonopodis pv. citri (strain 306).